Reading from the N-terminus, the 782-residue chain is Acetazolamide conferring resistance protein zam (782 aa).

One can recognise an RNB domain in the interval 270 to 579; sequence EVALSLESQA…QRLLKLVLTE (310 aa). The region spanning 655-736 is the S1 motif domain; the sequence is GEIFRGLITG…YRQQIDLGAV (82 aa). Residues 737–782 form a disordered region; sequence NNAPKDSANMDFDDDDEDGDEREEQDTMDWDAMEDGDDDEGGAVIF. The segment covering 747-782 has biased composition (acidic residues); it reads DFDDDDEDGDEREEQDTMDWDAMEDGDDDEGGAVIF.

Belongs to the RNR ribonuclease family.

Functionally, not known; control resistance to the carbonic anhydrase inhibitor acetazolamide. This is Acetazolamide conferring resistance protein zam (zam) from Synechocystis sp. (strain ATCC 27184 / PCC 6803 / Kazusa).